Reading from the N-terminus, the 302-residue chain is MSVIAADRKPASDRKPVSDRKLARAAASSDRRFAAISHALLILWSVIVIVPMLWVLMSSFKSTGEILSSPFSLPDHWRFENYANAWTDANIGKYFLNSVIVVVSALILVMLLGAMCAYVLARFEFPGRRLIYYVMLAGLTFPVFLAIVPLFFQLQNFGLLNTRPGLILTYVAFALPFTMFFLYSFFRSLPHDVYEAALIDGAGDWRAFFQVMLPMARPGMAAVAIFNFLGLWNQFLLPVALNTDQDKWVLTQGMAAYASSQVYDIDYGALFAAIVVTVVPVLLVYCVFQRRIAGSVSQGTFR.

6 helical membrane passes run 40-60 (LLIL…MSSF), 99-119 (VIVV…CAYV), 131-151 (IYYV…VPLF), 166-186 (LILT…YSFF), 221-241 (AAVA…PVAL), and 268-288 (GALF…YCVF). The ABC transmembrane type-1 domain occupies 95–288 (FLNSVIVVVS…VPVLLVYCVF (194 aa)).

Belongs to the binding-protein-dependent transport system permease family. As to quaternary structure, the complex is composed of two ATP-binding proteins (MsiK), two transmembrane proteins (NgcF and NgcG) and a solute-binding protein (NgcE).

It is found in the cell membrane. Functionally, part of the ABC transporter complex NgcEFG-MsiK involved in N,N'-diacetylchitobiose ((GlcNAc)2) uptake. Responsible for the translocation of the substrate across the membrane. This is Diacetylchitobiose uptake system permease protein NgcG from Streptomyces coelicolor (strain ATCC BAA-471 / A3(2) / M145).